We begin with the raw amino-acid sequence, 161 residues long: Nucleotide-binding protein mma_0840 (161 aa).

This sequence belongs to the YajQ family.

Functionally, nucleotide-binding protein. This chain is Nucleotide-binding protein mma_0840, found in Janthinobacterium sp. (strain Marseille) (Minibacterium massiliensis).